The chain runs to 104 residues: ESAT-6-like protein (104 aa).

Residues 12–43 adopt a coiled-coil conformation; sequence MAQAAQDIEQSANAIRGMQNQLASAKDQLRSH.

The protein belongs to the WXG100 family. CFP-10 subfamily. As to quaternary structure, in isolation forms a homodimer. Forms a tight 1:1 complex with EsxA. Forms a complex with EsxA and EccC, probably wholly mediated by EsxB; binds in a pocket in the third FtsK (ATPase) domain of EccC (residues 1163-1208).

Its subcellular location is the secreted. Its function is as follows. May help regulate assembly and function of the type VII secretion system (T7SS). Binds to EccC and induces its multimerization. May serve as a chaperone for EsxA. The sequence is that of ESAT-6-like protein from Thermomonospora curvata (strain ATCC 19995 / DSM 43183 / JCM 3096 / KCTC 9072 / NBRC 15933 / NCIMB 10081 / Henssen B9).